We begin with the raw amino-acid sequence, 167 residues long: MPTFVDPSKCDGCKGGEKTACMYICPNDLMILDPEEMKAFNQEPEACWECYSCIKICPQGAITARPYADFAPMGGTCIPLRGSEDIMWTIKFRNGSVKRFKFPIRTTPEGSIKPFEGKPEAGDLENELLFTETALTVPQVALGQKAQIADAETSQCWFDLPCEGGNR.

4Fe-4S ferredoxin-type domains follow at residues 1 to 35 (MPTF…LDPE) and 38 to 67 (KAFN…ARPY). [4Fe-4S] cluster is bound by residues Cys-10, Cys-13, Cys-21, Cys-25, Cys-47, Cys-50, Cys-53, and Cys-57.

In terms of assembly, heterodimer composed of AprA and AprB. The heterodimers can dimerize to form heterotetramers. [4Fe-4S] cluster serves as cofactor.

The protein localises to the cytoplasm. Iron-sulfur cluster subunit of the adenylylsulfate reductase which catalyzes reversibly the reduction of adenosine 5'-phosphosulfate (APS) to sulfite and AMP during dissimilatory sulfate reduction. The iron-sulfur cluster 2 is thought to accept electrons from a still unknown electron donor and transfer electrons to the iron-sulfur cluster 1 of this protein and then onto the FAD of AprA. This chain is Adenylylsulfate reductase subunit beta, found in Megalodesulfovibrio gigas (strain ATCC 19364 / DSM 1382 / NCIMB 9332 / VKM B-1759) (Desulfovibrio gigas).